The primary structure comprises 512 residues: Zinc finger CCCH-type with G patch domain-containing protein (512 aa).

The segment at 159-186 adopts a C3H1-type zinc-finger fold; sequence QEMVPCAYFLEGDCKFNDEMCRFSHGEL. Residues 255-280 form a disordered region; sequence LEGDDVPSSDSESNSDSDEENEDDVV. Positions 256–279 are enriched in acidic residues; it reads EGDDVPSSDSESNSDSDEENEDDV. One can recognise a G-patch domain in the interval 308-354; the sequence is TKGIGSKIMLKMGYVVGAGLGSKGEGIVVPVSAQVLPQGRSLDYCMQ. Residues 407–417 show a composition bias toward low complexity; sequence SSNGSSSSSGS. Positions 407-432 are disordered; sequence SSNGSSSSSGSKKPAAKDNQMDLPSC.

The protein localises to the nucleus. Transcription repressor. In Aedes aegypti (Yellowfever mosquito), this protein is Zinc finger CCCH-type with G patch domain-containing protein.